The sequence spans 302 residues: tRNA pseudouridine synthase B (302 aa).

Aspartate 45 acts as the Nucleophile in catalysis.

This sequence belongs to the pseudouridine synthase TruB family. Type 1 subfamily.

It catalyses the reaction uridine(55) in tRNA = pseudouridine(55) in tRNA. Functionally, responsible for synthesis of pseudouridine from uracil-55 in the psi GC loop of transfer RNAs. The polypeptide is tRNA pseudouridine synthase B (Francisella philomiragia subsp. philomiragia (strain ATCC 25017 / CCUG 19701 / FSC 153 / O#319-036)).